The primary structure comprises 122 residues: Large ribosomal subunit protein uL14 (122 aa).

Belongs to the universal ribosomal protein uL14 family. As to quaternary structure, part of the 50S ribosomal subunit. Forms a cluster with proteins L3 and L19. In the 70S ribosome, L14 and L19 interact and together make contacts with the 16S rRNA in bridges B5 and B8.

In terms of biological role, binds to 23S rRNA. Forms part of two intersubunit bridges in the 70S ribosome. This is Large ribosomal subunit protein uL14 from Paenarthrobacter aurescens (strain TC1).